We begin with the raw amino-acid sequence, 258 residues long: Phosphoadenosine 5'-phosphosulfate reductase (258 aa).

Cys-244 serves as the catalytic Nucleophile; cysteine thiosulfonate intermediate.

The protein belongs to the PAPS reductase family. CysH subfamily.

It localises to the cytoplasm. The enzyme catalyses [thioredoxin]-disulfide + sulfite + adenosine 3',5'-bisphosphate + 2 H(+) = [thioredoxin]-dithiol + 3'-phosphoadenylyl sulfate. The protein operates within sulfur metabolism; hydrogen sulfide biosynthesis; sulfite from sulfate: step 3/3. Its function is as follows. Catalyzes the formation of sulfite from phosphoadenosine 5'-phosphosulfate (PAPS) using thioredoxin as an electron donor. The protein is Phosphoadenosine 5'-phosphosulfate reductase of Vibrio vulnificus (strain YJ016).